Reading from the N-terminus, the 967-residue chain is Muscular LMNA-interacting protein (967 aa).

At S129 the chain carries Phosphoserine. Disordered regions lie at residues 132-154, 302-336, 432-462, 506-628, 644-685, 786-838, and 929-967; these read EDEA…IATR, GLAS…ASLT, QKVK…HQAS, GSTL…SASH, QTLQ…TPSL, SMHS…SQLT, and FSVR…DSKE. Positions 144–811 are required for interaction with ISL1; that stretch reads PPGGPGNIAT…GSETIKTPTT (668 aa). Over residues 437-455 the composition is skewed to low complexity; sequence TPPTSKKSLSSGSLTTGST. Residues 508–523 show a composition bias toward polar residues; that stretch reads TLRSNTTSPQPQTDTF. A compositionally biased stretch (low complexity) spans 528 to 541; sequence VPSVTPVLSPLSSS. Residues 543-556 show a composition bias toward basic and acidic residues; sequence GRKDGDSRTPEKNR. Polar residues-rich tracts occupy residues 558–567 and 658–685; these read ICIQPSTLAS and GSAT…TPSL. S792 is subject to Phosphoserine. The span at 800 to 811 shows a compositional bias: polar residues; the sequence is MLGSETIKTPTT. The segment covering 826–835 has biased composition (low complexity); the sequence is SSSSSTASES. Residues 938–947 are compositionally biased toward polar residues; sequence SPTLLSQDTY. Residues 958–967 show a composition bias toward basic and acidic residues; it reads PEHDTLDSKE.

Directly interacts with LMNA. Interacts with ISL1 (via N-terminal domain); the interaction represses ISL1 transactivator activity. Interactions of ISL1 with MLIP1 and GCN5/KAT2A may be mutually exclusive. May be ubiquitinated by UBE3C ubiquitin ligase; ubiquitination is followed by protein degradation. In terms of tissue distribution, predominantly expressed in the heart and skeletal muscle, but detected at lower levels in the lung and brain (at protein level). Also detected in smooth muscle, thymus and kidney. In brain, expressed by a subpopulation of cells within the hippocampus and cortex. In heart, expressed by cardiomyocytes. Expression is reduced in hypertrophic hearts at the transcript level. However, expression in hypertrophic hearts induced by transverse aortic constriction do not differ from control at the protein level.

The protein localises to the nucleus. It is found in the nucleus envelope. It localises to the PML body. Its subcellular location is the cytoplasm. The protein resides in the cytosol. The protein localises to the cell membrane. It is found in the sarcolemma. Its function is as follows. Required for myoblast differentiation into myotubes, possibly acting as a transcriptional regulator of the myogenic program. Required for cardiac adaptation to stress through integrated regulation of the AKT/mTOR pathways and FOXO1. Regulates cardiac homeostasis and plays a role in the protection against cardiac hypertrophy. Binds chromatin. May act as a transcriptional cofactor for ISL1, repressing its transcriptional activity. May also repress MYOCD transcriptional activity. This is Muscular LMNA-interacting protein from Mus musculus (Mouse).